The sequence spans 515 residues: 2,3-bisphosphoglycerate-independent phosphoglycerate mutase (515 aa).

2 residues coordinate Mn(2+): D14 and S64. Residue S64 is the Phosphoserine intermediate of the active site. Residues H125, 155–156 (RD), R187, R193, 263–266 (RADR), and K337 each bind substrate. Residues D404, H408, D445, H446, and H464 each contribute to the Mn(2+) site.

The protein belongs to the BPG-independent phosphoglycerate mutase family. As to quaternary structure, monomer. Requires Mn(2+) as cofactor.

It catalyses the reaction (2R)-2-phosphoglycerate = (2R)-3-phosphoglycerate. It functions in the pathway carbohydrate degradation; glycolysis; pyruvate from D-glyceraldehyde 3-phosphate: step 3/5. In terms of biological role, catalyzes the interconversion of 2-phosphoglycerate and 3-phosphoglycerate. The protein is 2,3-bisphosphoglycerate-independent phosphoglycerate mutase of Yersinia pestis bv. Antiqua (strain Antiqua).